The following is a 180-amino-acid chain: Large ribosomal subunit protein uL5 (180 aa).

Belongs to the universal ribosomal protein uL5 family. Part of the 50S ribosomal subunit; part of the 5S rRNA/L5/L18/L25 subcomplex. Contacts the 5S rRNA and the P site tRNA. Forms a bridge to the 30S subunit in the 70S ribosome.

In terms of biological role, this is one of the proteins that bind and probably mediate the attachment of the 5S RNA into the large ribosomal subunit, where it forms part of the central protuberance. In the 70S ribosome it contacts protein S13 of the 30S subunit (bridge B1b), connecting the 2 subunits; this bridge is implicated in subunit movement. Contacts the P site tRNA; the 5S rRNA and some of its associated proteins might help stabilize positioning of ribosome-bound tRNAs. This chain is Large ribosomal subunit protein uL5, found in Latilactobacillus sakei subsp. sakei (strain 23K) (Lactobacillus sakei subsp. sakei).